The sequence spans 89 residues: Small ribosomal subunit protein uS15 (89 aa).

The segment covering 1–13 (MTISKERKEEVIS) has biased composition (basic and acidic residues). The segment at 1-24 (MTISKERKEEVISEHGAAAGDTGS) is disordered.

It belongs to the universal ribosomal protein uS15 family. As to quaternary structure, part of the 30S ribosomal subunit. Forms a bridge to the 50S subunit in the 70S ribosome, contacting the 23S rRNA.

Functionally, one of the primary rRNA binding proteins, it binds directly to 16S rRNA where it helps nucleate assembly of the platform of the 30S subunit by binding and bridging several RNA helices of the 16S rRNA. In terms of biological role, forms an intersubunit bridge (bridge B4) with the 23S rRNA of the 50S subunit in the ribosome. This is Small ribosomal subunit protein uS15 from Rhodopirellula baltica (strain DSM 10527 / NCIMB 13988 / SH1).